Consider the following 765-residue polypeptide: Putative ankyrin repeat protein L371 (765 aa).

ANK repeat units follow at residues 60 to 89, 93 to 122, 132 to 161, 165 to 194, 198 to 227, 232 to 261, 265 to 295, 322 to 353, and 357 to 395; these read NGNY…RLDV, EGNS…KIIG, KGSV…NANY, DNVN…NLNA, QGST…DQNI, LDFY…NPNH, EGNT…RCRS, DGLT…NLNY, and TGNT…GKTV.

This is Putative ankyrin repeat protein L371 from Acanthamoeba polyphaga mimivirus (APMV).